The sequence spans 329 residues: Glycerol-3-phosphate dehydrogenase [NAD(P)+] (329 aa).

Positions 10, 11, 31, and 105 each coordinate NADPH. Sn-glycerol 3-phosphate is bound by residues K105, G134, and S136. A138 contacts NADPH. The sn-glycerol 3-phosphate site is built by K189, D242, S252, R253, and N254. K189 serves as the catalytic Proton acceptor. R253 is an NADPH binding site. The NADPH site is built by V277 and E279.

The protein belongs to the NAD-dependent glycerol-3-phosphate dehydrogenase family.

Its subcellular location is the cytoplasm. The enzyme catalyses sn-glycerol 3-phosphate + NAD(+) = dihydroxyacetone phosphate + NADH + H(+). The catalysed reaction is sn-glycerol 3-phosphate + NADP(+) = dihydroxyacetone phosphate + NADPH + H(+). The protein operates within membrane lipid metabolism; glycerophospholipid metabolism. Catalyzes the reduction of the glycolytic intermediate dihydroxyacetone phosphate (DHAP) to sn-glycerol 3-phosphate (G3P), the key precursor for phospholipid synthesis. The chain is Glycerol-3-phosphate dehydrogenase [NAD(P)+] from Neisseria meningitidis serogroup C (strain 053442).